Reading from the N-terminus, the 847-residue chain is Alpha-glucuronidase A (847 aa).

The signal sequence occupies residues 1 to 22 (MRSFLLLTALLGVAAVAEDGLA). Residues Asn48, Asn78, Asn227, Asn315, Asn349, Asn457, Asn472, Asn534, Asn583, Asn689, Asn738, Asn739, and Asn769 are each glycosylated (N-linked (GlcNAc...) asparagine).

It belongs to the glycosyl hydrolase 67 family.

Its subcellular location is the secreted. It catalyses the reaction an alpha-D-glucuronoside + H2O = D-glucuronate + an alcohol. In terms of biological role, alpha-glucuronidase involved in the hydrolysis of xylan, a major structural heterogeneous polysaccharide found in plant biomass representing the second most abundant polysaccharide in the biosphere, after cellulose. Releases 4-O-methylglucuronic acid from xylan. The sequence is that of Alpha-glucuronidase A (aguA) from Emericella nidulans (strain FGSC A4 / ATCC 38163 / CBS 112.46 / NRRL 194 / M139) (Aspergillus nidulans).